We begin with the raw amino-acid sequence, 377 residues long: Proteinase-activated receptor 3 (377 aa).

A signal peptide spans 1-19 (MRAAIFAAIGALLLSPASC). The propeptide at 20–38 (QSGMEYDADNLAKPTLSIK) is removed for receptor activation. The Extracellular portion of the chain corresponds to 39-94 (TFRGAPQNSFEEFPLSAIEGWTGTTKTVKIKCPEELDSNLHVNNATMGYLSSPLST). The N-linked (GlcNAc...) asparagine glycan is linked to N82. Residues 95 to 120 (KLIPAIYILVFAVGMPANAVTLWMLF) form a helical membrane-spanning segment. At 121-127 (RTRTIRM) the chain is on the cytoplasmic side. Residues 128 to 147 (TIFYTNLAIADFLFCVTLPF) traverse the membrane as a helical segment. Residues 148–166 (RIAYHLNGNNWVFGEVMCR) are Extracellular-facing. A disulfide bridge links C165 with C244. The chain crosses the membrane as a helical span at residues 167–188 (ATTVIFYGNMYCSILLLACISI). Topologically, residues 189–205 (NRYLAIVHPFTYRGLPK) are cytoplasmic. The helical transmembrane segment at 206-229 (RTYALLTCGLVWTTVFLYMLPFFI) threads the bilayer. Residues 230 to 259 (LKQEYYLVQQDITTCHDVHNTCESSSPFQL) lie on the Extracellular side of the membrane. Residues 260–279 (YYFISLAFFGFLIPFLVIIY) form a helical membrane-spanning segment. Residues 280-296 (CYTAIIWTLNAKDRRWL) are Cytoplasmic-facing. Residues 297–321 (WYIKASLLTFVIFTICFAPSNIILI) form a helical membrane-spanning segment. Residues 322–335 (IHHANYYYSNTDAL) are Extracellular-facing. A helical membrane pass occupies residues 336–360 (YFVYLIALCLGSLNSCLDPFLYFLM). The Cytoplasmic segment spans residues 361 to 377 (SKITDHSTAYLTMVKLS).

The protein belongs to the G-protein coupled receptor 1 family. Interacts with INSC/inscuteable and GPSM2. In terms of processing, a proteolytic cleavage generates a new N-terminus that functions as a tethered ligand.

The protein localises to the cell membrane. Functionally, receptor for activated thrombin coupled to G proteins that stimulate phosphoinositide hydrolysis. The sequence is that of Proteinase-activated receptor 3 (F2RL2) from Bos taurus (Bovine).